Here is a 179-residue protein sequence, read N- to C-terminus: DNA utilization protein HofN (179 aa).

The chain crosses the membrane as a helical span at residues 19 to 39 (LRFWLLMFVAPLLLAVGITLI).

The protein localises to the cell inner membrane. Required for the use of extracellular DNA as a nutrient. The chain is DNA utilization protein HofN (hofN) from Escherichia coli (strain K12).